The chain runs to 343 residues: Undecaprenyl-diphosphatase 2 (343 aa).

A run of 4 helical transmembrane segments spans residues 21–41 (LFPV…GGSW), 57–77 (PYLT…LVFF), 104–124 (LAWL…ALEH), and 129–149 (LFAK…ILLA). The span at 179-193 (VPAPATVPTQTTSAP) shows a compositional bias: low complexity. A disordered region spans residues 179 to 202 (VPAPATVPTQTTSAPGGRATARHT). 4 consecutive transmembrane segments (helical) span residues 225-245 (AGVI…RSGI), 265-285 (FLLA…ALAG), 294-314 (QVIL…RFLV), and 322-342 (LTPF…RFAI).

It belongs to the UppP family.

It is found in the cell membrane. The catalysed reaction is di-trans,octa-cis-undecaprenyl diphosphate + H2O = di-trans,octa-cis-undecaprenyl phosphate + phosphate + H(+). In terms of biological role, catalyzes the dephosphorylation of undecaprenyl diphosphate (UPP). Confers resistance to bacitracin. This Frankia alni (strain DSM 45986 / CECT 9034 / ACN14a) protein is Undecaprenyl-diphosphatase 2.